We begin with the raw amino-acid sequence, 29 residues long: Cytochrome b6-f complex subunit 8 (29 aa).

Residues 3–23 (IISLGWSSLLVVFTFSLSLVV) traverse the membrane as a helical segment.

Belongs to the PetN family. As to quaternary structure, the 4 large subunits of the cytochrome b6-f complex are cytochrome b6, subunit IV (17 kDa polypeptide, PetD), cytochrome f and the Rieske protein, while the 4 small subunits are PetG, PetL, PetM and PetN. The complex functions as a dimer.

Its subcellular location is the plastid. The protein resides in the chloroplast thylakoid membrane. In terms of biological role, component of the cytochrome b6-f complex, which mediates electron transfer between photosystem II (PSII) and photosystem I (PSI), cyclic electron flow around PSI, and state transitions. This is Cytochrome b6-f complex subunit 8 from Rhodomonas salina (Cryptomonas salina).